Reading from the N-terminus, the 248-residue chain is ATP synthase subunit a, chloroplastic (248 aa).

5 consecutive transmembrane segments (helical) span residues 35 to 55 (GQVF…SFLG), 94 to 114 (VPYI…GALI), 133 to 153 (INTT…AGLS), 202 to 222 (VFTL…GLFA), and 224 to 244 (SIQA…AMEG).

The protein belongs to the ATPase A chain family. As to quaternary structure, F-type ATPases have 2 components, CF(1) - the catalytic core - and CF(0) - the membrane proton channel. CF(1) has five subunits: alpha(3), beta(3), gamma(1), delta(1), epsilon(1). CF(0) has four main subunits: a, b, b' and c.

Its subcellular location is the plastid. The protein localises to the chloroplast thylakoid membrane. Functionally, key component of the proton channel; it plays a direct role in the translocation of protons across the membrane. The chain is ATP synthase subunit a, chloroplastic from Pyropia yezoensis (Susabi-nori).